We begin with the raw amino-acid sequence, 91 residues long: Conotoxin VnMKLT1-021 (91 aa).

Residues 1-22 form the signal peptide; it reads MKLTCVMIVAVLFLTAWTFVTA. The propeptide occupies 23–57; that stretch reads DDPRDGPDTAVGWRKLFSEARDEMKNREASKLNER. 3 cysteine pairs are disulfide-bonded: C59–C78, C66–C82, and C77–C86.

The protein belongs to the conotoxin O1 superfamily. In terms of tissue distribution, expressed by the venom duct.

It localises to the secreted. This chain is Conotoxin VnMKLT1-021, found in Conus ventricosus (Mediterranean cone).